The following is a 344-amino-acid chain: Glycerol-3-phosphate dehydrogenase [NAD(P)+] (344 aa).

4 residues coordinate NADPH: Ser-23, Trp-24, Arg-44, and Lys-118. Residues Lys-118, Gly-147, and Thr-149 each contribute to the sn-glycerol 3-phosphate site. Position 151 (Ala-151) interacts with NADPH. Sn-glycerol 3-phosphate-binding residues include Lys-202, Asp-255, Ser-265, Arg-266, and Asn-267. Lys-202 functions as the Proton acceptor in the catalytic mechanism. Arg-266 provides a ligand contact to NADPH. An NADPH-binding site is contributed by Glu-292.

This sequence belongs to the NAD-dependent glycerol-3-phosphate dehydrogenase family.

Its subcellular location is the cytoplasm. The catalysed reaction is sn-glycerol 3-phosphate + NAD(+) = dihydroxyacetone phosphate + NADH + H(+). The enzyme catalyses sn-glycerol 3-phosphate + NADP(+) = dihydroxyacetone phosphate + NADPH + H(+). The protein operates within membrane lipid metabolism; glycerophospholipid metabolism. Functionally, catalyzes the reduction of the glycolytic intermediate dihydroxyacetone phosphate (DHAP) to sn-glycerol 3-phosphate (G3P), the key precursor for phospholipid synthesis. In Nitrosococcus oceani (strain ATCC 19707 / BCRC 17464 / JCM 30415 / NCIMB 11848 / C-107), this protein is Glycerol-3-phosphate dehydrogenase [NAD(P)+].